A 620-amino-acid chain; its full sequence is 1-deoxy-D-xylulose-5-phosphate synthase (620 aa).

Thiamine diphosphate is bound by residues His80 and 121-123 (GHS). Asp152 is a binding site for Mg(2+). Thiamine diphosphate is bound by residues 153–154 (GA), Asn181, Tyr288, and Glu370. Asn181 serves as a coordination point for Mg(2+).

Belongs to the transketolase family. DXPS subfamily. As to quaternary structure, homodimer. Mg(2+) is required as a cofactor. The cofactor is thiamine diphosphate.

It carries out the reaction D-glyceraldehyde 3-phosphate + pyruvate + H(+) = 1-deoxy-D-xylulose 5-phosphate + CO2. It participates in metabolic intermediate biosynthesis; 1-deoxy-D-xylulose 5-phosphate biosynthesis; 1-deoxy-D-xylulose 5-phosphate from D-glyceraldehyde 3-phosphate and pyruvate: step 1/1. Functionally, catalyzes the acyloin condensation reaction between C atoms 2 and 3 of pyruvate and glyceraldehyde 3-phosphate to yield 1-deoxy-D-xylulose-5-phosphate (DXP). The sequence is that of 1-deoxy-D-xylulose-5-phosphate synthase from Escherichia coli O6:K15:H31 (strain 536 / UPEC).